A 230-amino-acid chain; its full sequence is Claudin-2 (230 aa).

Residues 1-7 (MASLGLQ) are Cytoplasmic-facing. The chain crosses the membrane as a helical span at residues 8 to 28 (LVGYILGLLGLLGTLVAMLLP). The Extracellular segment spans residues 29–81 (SWRTSSYVGTSIVTAVGFSKGLWMECATHSTGITQCDIYSTLLGLPADIQAAQ). C54 and C64 form a disulfide bridge. Residues 82-102 (AMMVTSSAISSLACIVSVVGM) traverse the membrane as a helical segment. The Cytoplasmic segment spans residues 103 to 116 (RCTVFCQDSRAKDR). Residues 117 to 137 (LAVVGGVFFIIGGLLGFIPVA) form a helical membrane-spanning segment. Topologically, residues 138 to 162 (WNLHGILRDFYSPLVPDSMKFEIGE) are extracellular. Residues 163 to 183 (ALYLGIISSLFSLVAGIILCF) traverse the membrane as a helical segment. Residues 184–230 (SCPLQGNRSDYYDSYQAQPLATRGSPRPGQPPKAKSEFNSYSLTGYV) are Cytoplasmic-facing. The segment at 205–230 (TRGSPRPGQPPKAKSEFNSYSLTGYV) is disordered. Residue K218 forms a Glycyl lysine isopeptide (Lys-Gly) (interchain with G-Cter in SUMO) linkage. 2 positions are modified to phosphoserine: S219 and S223. The segment covering 220–230 (EFNSYSLTGYV) has biased composition (polar residues). The segment at 229–230 (YV) is interaction with TJP1, TJP2 and TJP3.

The protein belongs to the claudin family. In terms of assembly, can form homo- and heteropolymers with other claudins to mediate paracellular barrier and channel functions of tight junctions in response to physiological stimuli. Homopolymers interact with CLDN3, but not CLDN1, homopolymers. Directly interacts with TJP1/ZO-1, TJP2/ZO-2 and TJP3/ZO-3. The disulfide bond is necessary for pore formation, but is not required for correct protein trafficking.

It is found in the cell junction. Its subcellular location is the tight junction. The protein localises to the cell membrane. The enzyme catalyses Na(+)(in) = Na(+)(out). It catalyses the reaction K(+)(in) = K(+)(out). It carries out the reaction Rb(+)(in) = Rb(+)(out). The catalysed reaction is Li(+)(in) = Li(+)(out). The enzyme catalyses Cs(+)(in) = Cs(+)(out). It catalyses the reaction Ca(2+)(in) = Ca(2+)(out). It carries out the reaction methylamine(out) = methylamine(in). The catalysed reaction is choline(out) = choline(in). The enzyme catalyses H2O(in) = H2O(out). Its function is as follows. Forms paracellular channels: polymerizes in tight junction strands with cation- and water-selective channels through the strands, conveying epithelial permeability in a process known as paracellular tight junction permeability. In intestinal epithelium, allows for sodium and water fluxes from the peritoneal side to the lumen of the intestine to regulate nutrient absorption and clear enteric pathogens as part of mucosal immune response. In kidney, allows passive sodium and calcium reabsorption across proximal tubules from the lumen back to the bloodstream. In the hepatobiliary tract, allows paracellular water and cation fluxes in the hepatic perivenous areas and biliary epithelium to generate bile flow and maintain osmotic gradients. In Canis lupus familiaris (Dog), this protein is Claudin-2 (CLDN2).